The following is a 322-amino-acid chain: Lipoyl synthase (322 aa).

The span at methionine 1–threonine 14 shows a compositional bias: polar residues. The tract at residues methionine 1–valine 30 is disordered. Positions proline 15–serine 26 are enriched in basic and acidic residues. Residues cysteine 70, cysteine 75, cysteine 81, cysteine 96, cysteine 100, cysteine 103, and serine 310 each coordinate [4Fe-4S] cluster. In terms of domain architecture, Radical SAM core spans phenylalanine 82–alanine 299.

It belongs to the radical SAM superfamily. Lipoyl synthase family. It depends on [4Fe-4S] cluster as a cofactor.

Its subcellular location is the cytoplasm. The catalysed reaction is [[Fe-S] cluster scaffold protein carrying a second [4Fe-4S](2+) cluster] + N(6)-octanoyl-L-lysyl-[protein] + 2 oxidized [2Fe-2S]-[ferredoxin] + 2 S-adenosyl-L-methionine + 4 H(+) = [[Fe-S] cluster scaffold protein] + N(6)-[(R)-dihydrolipoyl]-L-lysyl-[protein] + 4 Fe(3+) + 2 hydrogen sulfide + 2 5'-deoxyadenosine + 2 L-methionine + 2 reduced [2Fe-2S]-[ferredoxin]. The protein operates within protein modification; protein lipoylation via endogenous pathway; protein N(6)-(lipoyl)lysine from octanoyl-[acyl-carrier-protein]: step 2/2. Functionally, catalyzes the radical-mediated insertion of two sulfur atoms into the C-6 and C-8 positions of the octanoyl moiety bound to the lipoyl domains of lipoate-dependent enzymes, thereby converting the octanoylated domains into lipoylated derivatives. This is Lipoyl synthase from Methylococcus capsulatus (strain ATCC 33009 / NCIMB 11132 / Bath).